An 870-amino-acid polypeptide reads, in one-letter code: MOG interacting and ectopic P-granules protein 1 (870 aa).

The disordered stretch occupies residues 1 to 244; it reads MVTADETVLA…VPEEDNNEQA (244 aa). Polar residues predominate over residues 9-20; sequence LATTTNTTSMSV. Basic and acidic residues predominate over residues 41 to 51; that stretch reads EQLKAEQREVM. Composition is skewed to acidic residues over residues 77–99, 129–142, and 203–214; these read EVIE…DENG, IEQD…EITE, and IELDDDDDDEIQ. 2 C2H2-type zinc fingers span residues 421–444 and 450–473; these read HRCD…ENLH and FQCT…FETH. The CCHC-type zinc finger occupies 486–508; it reads YPCAICEEDFNFKGVREQHYKQC. Polar residues-rich tracts occupy residues 673-688 and 695-708; these read LQAA…SQKT and KLVT…VGSS. Residues 673 to 708 are disordered; that stretch reads LQAAVNSMRSQNSQKTPTHRSSKLVTTPSHATVGSS. 4 consecutive C2H2-type zinc fingers follow at residues 713-736, 753-776, 794-815, and 826-849; these read FVCE…QTTH, LACS…VMSH, GRCK…VADH, and YSCD…TSNH. The disordered stretch occupies residues 847–870; that stretch reads SNHPKGDKKTSTPAKKDDCITLDD. The span at 850–870 shows a compositional bias: basic and acidic residues; sequence PKGDKKTSTPAKKDDCITLDD.

As to quaternary structure, interacts with hda-1, let-418, lin-1, mog-1, mog-4, mog-5, mog-6, pie-1 and unc-98. Post-translationally, sumoylated. In terms of tissue distribution, expressed in somatic cells of embryos, the head, hypodermis and tail of larvae and the germline of adults, including oocytes but not mature sperm and spermatocytes.

The protein resides in the nucleus. Has a broad role in development, specifically in the genetic pathway SynMuvB that negatively regulates specification of the vulval cell fate. Required for fem-3 3'-UTR-mediated repression in the regulation of the sperm/oocyte switch. Acts by regulating the translation of fem-3 mRNA, by binding to its 3'-UTR. The sequence is that of MOG interacting and ectopic P-granules protein 1 from Caenorhabditis elegans.